The following is a 174-amino-acid chain: Ribosome maturation factor RimM (174 aa).

The region spanning 97–169 (GNKFYFHEVI…KVVMDLPEGL (73 aa)) is the PRC barrel domain.

It belongs to the RimM family. Binds ribosomal protein uS19.

It localises to the cytoplasm. In terms of biological role, an accessory protein needed during the final step in the assembly of 30S ribosomal subunit, possibly for assembly of the head region. Essential for efficient processing of 16S rRNA. May be needed both before and after RbfA during the maturation of 16S rRNA. It has affinity for free ribosomal 30S subunits but not for 70S ribosomes. In Flavobacterium psychrophilum (strain ATCC 49511 / DSM 21280 / CIP 103535 / JIP02/86), this protein is Ribosome maturation factor RimM.